The primary structure comprises 415 residues: Na(+)-translocating NADH-quinone reductase subunit B (415 aa).

A run of 4 helical transmembrane segments spans residues 23–40 (WFAL…PGLV), 56–76 (IMIM…YNAG), 129–149 (FLPI…LFCM), and 164–184 (ILFA…LGIT). Residue T236 is modified to FMN phosphoryl threonine. 5 consecutive transmembrane segments (helical) span residues 275–295 (VSTL…IASW), 297–317 (IIGG…VIGS), 325–345 (MPWH…FMAT), 358–378 (WAYG…NPAY), and 381–401 (GMML…HVVV).

Belongs to the NqrB/RnfD family. In terms of assembly, composed of six subunits; NqrA, NqrB, NqrC, NqrD, NqrE and NqrF. It depends on riboflavin as a cofactor. FMN is required as a cofactor.

The protein localises to the cell inner membrane. It carries out the reaction a ubiquinone + n Na(+)(in) + NADH + H(+) = a ubiquinol + n Na(+)(out) + NAD(+). NQR complex catalyzes the reduction of ubiquinone-1 to ubiquinol by two successive reactions, coupled with the transport of Na(+) ions from the cytoplasm to the periplasm. NqrA to NqrE are probably involved in the second step, the conversion of ubisemiquinone to ubiquinol. The protein is Na(+)-translocating NADH-quinone reductase subunit B of Vibrio cholerae serotype O1 (strain ATCC 39541 / Classical Ogawa 395 / O395).